Here is a 159-residue protein sequence, read N- to C-terminus: Ribosome maturation factor RimP (159 aa).

Belongs to the RimP family.

Its subcellular location is the cytoplasm. In terms of biological role, required for maturation of 30S ribosomal subunits. This is Ribosome maturation factor RimP from Geobacter metallireducens (strain ATCC 53774 / DSM 7210 / GS-15).